The following is a 185-amino-acid chain: Adenine phosphoribosyltransferase (185 aa).

It belongs to the purine/pyrimidine phosphoribosyltransferase family.

Its subcellular location is the cytoplasm. The enzyme catalyses AMP + diphosphate = 5-phospho-alpha-D-ribose 1-diphosphate + adenine. Its pathway is purine metabolism; AMP biosynthesis via salvage pathway; AMP from adenine: step 1/1. Functionally, catalyzes a salvage reaction resulting in the formation of AMP, that is energically less costly than de novo synthesis. The chain is Adenine phosphoribosyltransferase (aprt-1) from Caenorhabditis elegans.